Here is a 296-residue protein sequence, read N- to C-terminus: Phosphoribosylaminoimidazole-succinocarboxamide synthase (296 aa).

It belongs to the SAICAR synthetase family.

It catalyses the reaction 5-amino-1-(5-phospho-D-ribosyl)imidazole-4-carboxylate + L-aspartate + ATP = (2S)-2-[5-amino-1-(5-phospho-beta-D-ribosyl)imidazole-4-carboxamido]succinate + ADP + phosphate + 2 H(+). Its pathway is purine metabolism; IMP biosynthesis via de novo pathway; 5-amino-1-(5-phospho-D-ribosyl)imidazole-4-carboxamide from 5-amino-1-(5-phospho-D-ribosyl)imidazole-4-carboxylate: step 1/2. This Trichlorobacter lovleyi (strain ATCC BAA-1151 / DSM 17278 / SZ) (Geobacter lovleyi) protein is Phosphoribosylaminoimidazole-succinocarboxamide synthase.